Here is a 505-residue protein sequence, read N- to C-terminus: Elsinochrome transporter 1 (505 aa).

Residues M1–P10 show a composition bias toward gly residues. A disordered region spans residues M1–L25. The helical transmembrane segment at F35–L55 threads the bilayer. N-linked (GlcNAc...) asparagine glycans are attached at residues N64 and N80. Positions D221–T295 are disordered. The span at T255–S267 shows a compositional bias: low complexity. 6 consecutive transmembrane segments (helical) span residues V313–E333, L348–V368, K391–A411, A417–L437, V449–F469, and V479–P499.

It belongs to the major facilitator superfamily. Nitrate/nitrite porter (TC 2.A.1.8) family.

The protein localises to the cell membrane. Functionally, major facilitator-type transporter; part of the gene cluster that mediates the biosynthesis of elsinochromes, pigments consisting of at least four interconvertible tautomers (A, B, C and D) that have a core phenolic quinone to which various side chains are attached and which play an important role in fungal pathogenesis. Once elsinochrome is synthesized, it must be exported outside the fungal cells, which is probably accomplished by the ECT1 transporter, to avoid toxicity. The sequence is that of Elsinochrome transporter 1 from Elsinoe fawcettii (Citrus scab fungus).